We begin with the raw amino-acid sequence, 701 residues long: Acetyl-coenzyme A synthetase, cytoplasmic (701 aa).

The interval 1 to 41 is disordered; the sequence is MGLPEERVRSGSGSRGQEEAGAGGRARSWSPPPEVSRSAHV. Residues 1–107 are interaction with TFEB; sequence MGLPEERVRS…GATTNICYNV (107 aa). Phosphoserine is present on residues S28, S30, and S36. Residue 219-222 participates in CoA binding; sequence RGEK. Residues S263, S265, and S267 each carry the phosphoserine modification. T363 provides a ligand contact to CoA. N6-acetyllysine is present on K418. ATP is bound by residues 439–441, 463–468, D552, and R567; these read GEP and DTFWQT. Residues S575 and R636 each coordinate CoA. A Nuclear localization signal motif is present at residues 656 to 668; that stretch reads KTRSGKIMRRVLR. Phosphoserine; by AMPK is present on S659. At K661 the chain carries N6-acetyllysine.

The protein belongs to the ATP-dependent AMP-binding enzyme family. Monomer. Interacts with TFEB. AMPK-mediated phosphorylated form at Ser-659 interacts with KPNA1; this interaction results in nuclear translocation of ACSS2. Interacts with the 'Thr-172' phosphorylated form of PRKAA2. Interacts with CREBBP. Post-translationally, reversibly acetylated at Lys-661. The acetyl-CoA synthase activity is inhibited by acetylation and activated by deacetylation mediated by the deacetylases SIRT1 and SIRT3. Glucose deprivation results in its AMPK-dependent phosphorylation at Ser-659, which leads to exposure of its nuclear localization signal, required for its interaction with KPNA1 and subsequent translocation to the nucleus.

Its subcellular location is the cytoplasm. It localises to the cytosol. It is found in the nucleus. The catalysed reaction is acetate + ATP + CoA = acetyl-CoA + AMP + diphosphate. The enzyme catalyses propanoate + ATP + CoA = propanoyl-CoA + AMP + diphosphate. Its activity is regulated as follows. Inhibited by acetylation at Lys-661 and activated by deacetylation mediated by the deacetylases SIRT1 and SIRT3. In terms of biological role, catalyzes the synthesis of acetyl-CoA from short-chain fatty acids. Acetate is the preferred substrate. Can also utilize propionate with a much lower affinity. Nuclear ACSS2 promotes glucose deprivation-induced lysosomal biogenesis and autophagy, tumor cell survival and brain tumorigenesis. Glucose deprivation results in AMPK-mediated phosphorylation of ACSS2 leading to its translocation to the nucleus where it binds to TFEB and locally produces acetyl-CoA for histone acetylation in the promoter regions of TFEB target genes thereby activating their transcription. The regulation of genes associated with autophagy and lysosomal activity through ACSS2 is important for brain tumorigenesis and tumor survival. Acts as a chromatin-bound transcriptional coactivator that up-regulates histone acetylation and expression of neuronal genes. Can be recruited to the loci of memory-related neuronal genes to maintain a local acetyl-CoA pool, providing the substrate for histone acetylation and promoting the expression of specific genes, which is essential for maintaining long-term spatial memory. This Homo sapiens (Human) protein is Acetyl-coenzyme A synthetase, cytoplasmic (ACSS2).